We begin with the raw amino-acid sequence, 188 residues long: Adenylate kinase (188 aa).

12–17 serves as a coordination point for ATP; that stretch reads GSGKTT. The interval 33-62 is NMP; the sequence is STGDLLRAEVASGSELGKKIDSFISKGNLV. AMP-binding positions include Thr34, Arg39, 60-62, 87-90, and Gln94; these read NLV and GYPR. Residues 129 to 135 form an LID region; the sequence is GRARGAD. Arg130 contacts ATP. Arg132 and Arg144 together coordinate AMP. Arg172 lines the ATP pocket.

Belongs to the adenylate kinase family. Monomer.

It is found in the cytoplasm. It catalyses the reaction AMP + ATP = 2 ADP. Its pathway is purine metabolism; AMP biosynthesis via salvage pathway; AMP from ADP: step 1/1. Functionally, catalyzes the reversible transfer of the terminal phosphate group between ATP and AMP. Plays an important role in cellular energy homeostasis and in adenine nucleotide metabolism. The polypeptide is Adenylate kinase (Campylobacter curvus (strain 525.92)).